A 467-amino-acid polypeptide reads, in one-letter code: A-type ATP synthase subunit B (467 aa).

The disordered stretch occupies residues 95–114; it reads GKGQPRDHMPLPPPEDFRDV.

This sequence belongs to the ATPase alpha/beta chains family. In terms of assembly, has multiple subunits with at least A(3), B(3), C, D, E, F, H, I and proteolipid K(x).

It is found in the cell membrane. Its function is as follows. Component of the A-type ATP synthase that produces ATP from ADP in the presence of a proton gradient across the membrane. The B chain is a regulatory subunit. The chain is A-type ATP synthase subunit B from Pyrobaculum aerophilum (strain ATCC 51768 / DSM 7523 / JCM 9630 / CIP 104966 / NBRC 100827 / IM2).